We begin with the raw amino-acid sequence, 430 residues long: Serine--tRNA ligase (430 aa).

238-240 provides a ligand contact to L-serine; that stretch reads TAE. An ATP-binding site is contributed by 269–271; sequence RRE. Glu292 is a binding site for L-serine. 356–359 provides a ligand contact to ATP; sequence EISS. Ser392 is a binding site for L-serine.

Belongs to the class-II aminoacyl-tRNA synthetase family. Type-1 seryl-tRNA synthetase subfamily. As to quaternary structure, homodimer. The tRNA molecule binds across the dimer.

The protein localises to the cytoplasm. It catalyses the reaction tRNA(Ser) + L-serine + ATP = L-seryl-tRNA(Ser) + AMP + diphosphate + H(+). It carries out the reaction tRNA(Sec) + L-serine + ATP = L-seryl-tRNA(Sec) + AMP + diphosphate + H(+). Its pathway is aminoacyl-tRNA biosynthesis; selenocysteinyl-tRNA(Sec) biosynthesis; L-seryl-tRNA(Sec) from L-serine and tRNA(Sec): step 1/1. Functionally, catalyzes the attachment of serine to tRNA(Ser). Is also able to aminoacylate tRNA(Sec) with serine, to form the misacylated tRNA L-seryl-tRNA(Sec), which will be further converted into selenocysteinyl-tRNA(Sec). The protein is Serine--tRNA ligase of Synechocystis sp. (strain ATCC 27184 / PCC 6803 / Kazusa).